Here is a 1104-residue protein sequence, read N- to C-terminus: Lon protease homolog, mitochondrial (1104 aa).

Residues 1–58 (MLPLRAFARLAQRPRLSRPTQLARSSLPRPSPSRPAAHYLALAPAPSTRFLHSSPPVL) constitute a mitochondrion transit peptide. Residues 8–144 (ARLAQRPRLS…PGAGGPKEVA (137 aa)) form a disordered region. Residues 22–46 (LARSSLPRPSPSRPAAHYLALAPAP) are compositionally biased toward low complexity. Residues 80-103 (KQDDQVEKPLPDAESSKSAEERAK) are compositionally biased toward basic and acidic residues. Residues 104-128 (SQSSKPDIKASSSDSVSSSAPAPGS) show a composition bias toward low complexity. Residues 129–139 (ADGGSPPGAGG) show a composition bias toward gly residues. Positions 155–444 (VLAIPITHRP…RALVLLKKEL (290 aa)) constitute a Lon N-terminal domain. 597–604 (GPPGVGKT) contributes to the ATP binding site. The 188-residue stretch at 895–1082 (SPPAGVSTGL…RQVLHEAFRG (188 aa)) folds into the Lon proteolytic domain. Residues Ser-987 and Lys-1030 contribute to the active site.

It belongs to the peptidase S16 family. In terms of assembly, homohexamer or homoheptamer. Organized in a ring with a central cavity.

The protein localises to the mitochondrion matrix. The enzyme catalyses Hydrolysis of proteins in presence of ATP.. In terms of biological role, ATP-dependent serine protease that mediates the selective degradation of misfolded, unassembled or oxidatively damaged polypeptides as well as certain short-lived regulatory proteins in the mitochondrial matrix. May also have a chaperone function in the assembly of inner membrane protein complexes. Participates in the regulation of mitochondrial gene expression and in the maintenance of the integrity of the mitochondrial genome. Binds to mitochondrial DNA in a site-specific manner. This is Lon protease homolog, mitochondrial from Cryptococcus neoformans var. neoformans serotype D (strain B-3501A) (Filobasidiella neoformans).